The following is a 308-amino-acid chain: Cytochrome c biogenesis protein CcsA (308 aa).

The next 7 helical transmembrane spans lie at 2-22 (IVSTLEHILTHISLSIVSILI), 44-64 (GMLITFLCITGLLANNWIYLG), 71-91 (LSESLIFLSWSFALIHSIGYF), 143-163 (MILGYAALLCGSLLSVALMVI), 212-232 (VISLGFIFLTIGILSGAVWAN), 247-267 (WAFITWIVFAIYLHTRININL), and 273-293 (AIVASLGFIIIWICYFGVNLV).

The protein belongs to the CcmF/CycK/Ccl1/NrfE/CcsA family. As to quaternary structure, may interact with Ccs1.

It is found in the plastid membrane. In terms of biological role, required during biogenesis of c-type cytochromes (cytochrome c6 and cytochrome f) at the step of heme attachment. In Cuscuta reflexa (Southern Asian dodder), this protein is Cytochrome c biogenesis protein CcsA.